Here is a 311-residue protein sequence, read N- to C-terminus: Mediator of RNA polymerase II transcription subunit 27 (311 aa).

Position 132 is a phosphoserine (Ser132). N6-methyllysine is present on Lys134.

This sequence belongs to the Mediator complex subunit 27 family. In terms of assembly, component of the Mediator complex, which is composed of MED1, MED4, MED6, MED7, MED8, MED9, MED10, MED11, MED12, MED13, MED13L, MED14, MED15, MED16, MED17, MED18, MED19, MED20, MED21, MED22, MED23, MED24, MED25, MED26, MED27, MED29, MED30, MED31, CCNC, CDK8 and CDC2L6/CDK11. The MED12, MED13, CCNC and CDK8 subunits form a distinct module termed the CDK8 module. Mediator containing the CDK8 module is less active than Mediator lacking this module in supporting transcriptional activation. Individual preparations of the Mediator complex lacking one or more distinct subunits have been variously termed ARC, CRSP, DRIP, PC2, SMCC and TRAP.

The protein resides in the nucleus. In terms of biological role, component of the Mediator complex, a coactivator involved in the regulated transcription of nearly all RNA polymerase II-dependent genes. Mediator functions as a bridge to convey information from gene-specific regulatory proteins to the basal RNA polymerase II transcription machinery. Mediator is recruited to promoters by direct interactions with regulatory proteins and serves as a scaffold for the assembly of a functional preinitiation complex with RNA polymerase II and the general transcription factors. The chain is Mediator of RNA polymerase II transcription subunit 27 (MED27) from Bos taurus (Bovine).